The primary structure comprises 790 residues: Probable phosphoketolase (790 aa).

This sequence belongs to the XFP family. Thiamine diphosphate serves as cofactor.

This chain is Probable phosphoketolase, found in Nitrosomonas europaea (strain ATCC 19718 / CIP 103999 / KCTC 2705 / NBRC 14298).